Consider the following 188-residue polypeptide: Acireductone dioxygenase (188 aa).

Residues His97, His99, Glu103, and His141 each coordinate Fe(2+). His97, His99, Glu103, and His141 together coordinate Ni(2+).

This sequence belongs to the acireductone dioxygenase (ARD) family. In terms of assembly, monomer. It depends on Fe(2+) as a cofactor. Ni(2+) is required as a cofactor.

It catalyses the reaction 1,2-dihydroxy-5-(methylsulfanyl)pent-1-en-3-one + O2 = 3-(methylsulfanyl)propanoate + CO + formate + 2 H(+). The enzyme catalyses 1,2-dihydroxy-5-(methylsulfanyl)pent-1-en-3-one + O2 = 4-methylsulfanyl-2-oxobutanoate + formate + 2 H(+). It participates in amino-acid biosynthesis; L-methionine biosynthesis via salvage pathway; L-methionine from S-methyl-5-thio-alpha-D-ribose 1-phosphate: step 5/6. In terms of biological role, catalyzes 2 different reactions between oxygen and the acireductone 1,2-dihydroxy-3-keto-5-methylthiopentene (DHK-MTPene) depending upon the metal bound in the active site. Fe-containing acireductone dioxygenase (Fe-ARD) produces formate and 2-keto-4-methylthiobutyrate (KMTB), the alpha-ketoacid precursor of methionine in the methionine recycle pathway. Ni-containing acireductone dioxygenase (Ni-ARD) produces methylthiopropionate, carbon monoxide and formate, and does not lie on the methionine recycle pathway. The sequence is that of Acireductone dioxygenase from Xanthomonas axonopodis pv. citri (strain 306).